The following is a 278-amino-acid chain: Pantothenate synthetase (278 aa).

31–38 is a binding site for ATP; the sequence is MGALHEGH. His-38 serves as the catalytic Proton donor. Gln-62 is a (R)-pantoate binding site. Gln-62 is a binding site for beta-alanine. 148-151 serves as a coordination point for ATP; sequence GEKD. Gln-154 serves as a coordination point for (R)-pantoate. Residues Leu-177 and 185–188 each bind ATP; that span reads MSSR.

It belongs to the pantothenate synthetase family. As to quaternary structure, homodimer.

The protein localises to the cytoplasm. It carries out the reaction (R)-pantoate + beta-alanine + ATP = (R)-pantothenate + AMP + diphosphate + H(+). The protein operates within cofactor biosynthesis; (R)-pantothenate biosynthesis; (R)-pantothenate from (R)-pantoate and beta-alanine: step 1/1. Its function is as follows. Catalyzes the condensation of pantoate with beta-alanine in an ATP-dependent reaction via a pantoyl-adenylate intermediate. The chain is Pantothenate synthetase from Acidiphilium cryptum (strain JF-5).